Reading from the N-terminus, the 287-residue chain is MAPANLPSVFNATSQDIEMLLAAQSHIGSKNLQVHMAPYLWKTRQDGVNVINVGKTWEKIVLAARIITAIDNPADVCVISARPYGQRAVLKFAAHTGAQAIAGRFTPGSFTNYITRSFKEPRLIVVTDPRTDAQAIKEASYVNIPVIALCDTDSPTEYVDVAIPTNNKGRHAIGCIWWMLAREVLRLRGTIYNRETPWDVMVDLYFYRDPEAEAEDKVEEEKLAGVEEVGPAAIESGFATGGGDWEATAPAAASGWDDAAAQPQNWDSAAQGAASWDEAAAPKEGQW.

The disordered stretch occupies residues 235 to 287; it reads ESGFATGGGDWEATAPAAASGWDDAAAQPQNWDSAAQGAASWDEAAAPKEGQW. Residues 247–261 are compositionally biased toward low complexity; sequence ATAPAAASGWDDAAA.

Belongs to the universal ribosomal protein uS2 family. In terms of assembly, component of the small ribosomal subunit. Mature ribosomes consist of a small (40S) and a large (60S) subunit. The 40S subunit contains about 33 different proteins and 1 molecule of RNA (18S). The 60S subunit contains about 49 different proteins and 3 molecules of RNA (25S, 5.8S and 5S). Interacts with RPS21.

It localises to the cytoplasm. In terms of biological role, required for the assembly and/or stability of the 40S ribosomal subunit. Required for the processing of the 20S rRNA-precursor to mature 18S rRNA in a late step of the maturation of 40S ribosomal subunits. The protein is Small ribosomal subunit protein uS2 of Pyricularia oryzae (strain 70-15 / ATCC MYA-4617 / FGSC 8958) (Rice blast fungus).